The following is a 3122-amino-acid chain: MPGAAGVLLLLLLSGGLGGVQAQRPQQQRQSQAHQQRGLFPAVLNLASNALITTNATCGEKGPEMYCKLVEHVPGQPVRNPQCRICNQNSSNPNQRHPITNAIDGKNTWWQSPSIKNGIEYHYVTITLDLQQVFQIAYVIVKAANSPRPGNWILERSLDDVEYKPWQYHAVTDTECLTLYNIYPRTGPPSYAKDDEVICTSFYSKIHPLENGEIHISLINGRPSADDPSPELLEFTSARYIRLRFQRIRTLNADLMMFAHKDPREIDPIVTRRYYYSVKDISVGGMCICYGHARACPLDPATNKSRCECEHNTCGDSCDQCCPGFHQKPWRAGTFLTKTECEACNCHGKAEECYYDENVARRNLSLNIRGKYIGGGVCINCTQNTAGINCETCTDGFFRPKGVSPNYPRPCQPCHCDPIGSLNEVCVKDEKHARRGLAPGSCHCKTGFGGVSCDRCARGYTGYPDCKACNCSGLGSKNEDPCFGPCICKENVEGGDCSRCKSGFFNLQEDNWKGCDECFCSGVSNRCQSSYWTYGKIQDMSGWYLTDLPGRIRVAPQQDDLDSPQQISISNAEARQALPHSYYWSAPAPYLGNKLPAVGGQLTFTISYDLEEEEEDTERVLQLMIILEGNDLSISTAQDEVYLHPSEEHTNVLLLKEESFTIHGTHFPVRRKEFMTVLANLKRVLLQITYSFGMDAIFRLSSVNLESAVSYPTDGSIAAAVEVCQCPPGYTGSSCESCWPRHRRVNGTIFGGICEPCQCFGHAESCDDVTGECLNCKDHTGGPYCDKCLPGFYGEPTKGTSEDCQPCACPLNIPSNNFSPTCHLDRSLGLICDGCPVGYTGPRCERCAEGYFGQPSVPGGSCQPCQCNDNLDFSIPGSCDSLSGSCLICKPGTTGRYCELCADGYFGDAVDAKNCQPCRCNAGGSFSEVCHSQTGQCECRANVQGQRCDKCKAGTFGLQSARGCVPCNCNSFGSKSFDCEESGQCWCQPGVTGKKCDRCAHGYFNFQEGGCTACECSHLGNNCDPKTGRCICPPNTIGEKCSKCAPNTWGHSITTGCKACNCSTVGSLDFQCNVNTGQCNCHPKFSGAKCTECSRGHWNYPRCNLCDCFLPGTDATTCDSETKKCSCSDQTGQCTCKVNVEGIHCDRCRPGKFGLDAKNPLGCSSCYCFGTTTQCSEAKGLIRTWVTLKAEQTILPLVDEALQHTTTKGIVFQHPEIVAHMDLMREDLHLEPFYWKLPEQFEGKKLMAYGGKLKYAIYFEAREETGFSTYNPQVIIRGGTPTHARIIVRHMAAPLIGQLTRHEIEMTEKEWKYYGDDPRVHRTVTREDFLDILYDIHYILIKATYGNFMRQSRISEISMEVAEQGRGTTMTPPADLIEKCDCPLGYSGLSCEACLPGFYRLRSQPGGRTPGPTLGTCVPCQCNGHSSLCDPETSICQNCQHHTAGDFCERCALGYYGIVKGLPNDCQQCACPLISSSNNFSPSCVAEGLDDYRCTACPRGYEGQYCERCAPGYTGSPGNPGGSCQECECDPYGSLPVPCDPVTGFCTCRPGATGRKCDGCKHWHAREGWECVFCGDECTGLLLGDLARLEQMVMSINLTGPLPAPYKMLYGLENMTQELKHLLSPQRAPERLIQLAEGNLNTLVTEMNELLTRATKVTADGEQTGQDAERTNTRAKSLGEFIKELARDAEAVNEKAIKLNETLGTRDEAFERNLEGLQKEIDQMIKELRRKNLETQKEIAEDELVAAEALLKKVKKLFGESRGENEEMEKDLREKLADYKNKVDDAWDLLREATDKIREANRLFAVNQKNMTALEKKKEAVESGKRQIENTLKEGNDILDEANRLADEINSIIDYVEDIQTKLPPMSEELNDKIDDLSQEIKDRKLAEKVSQAESHAAQLNDSSAVLDGILDEAKNISFNATAAFKAYSNIKDYIDEAEKVAKEAKDLAHEATKLATGPRGLLKEDAKGCLQKSFRILNEAKKLANDVKENEDHLNGLKTRIENADARNGDLLRTLNDTLGKLSAIPNDTAAKLQAVKDKARQANDTAKDVLAQITELHQNLDGLKKNYNKLADSVAKTNAVVKDPSKNKIIADADATVKNLEQEADRLIDKLKPIKELEDNLKKNISEIKELINQARKQANSIKVSVSSGGDCIRTYKPEIKKGSYNNIVVNVKTAVADNLLFYLGSAKFIDFLAIEMRKGKVSFLWDVGSGVGRVEYPDLTIDDSYWYRIVASRTGRNGTISVRALDGPKASIVPSTHHSTSPPGYTILDVDANAMLFVGGLTGKLKKADAVRVITFTGCMGETYFDNKPIGLWNFREKEGDCKGCTVSPQVEDSEGTIQFDGEGYALVSRPIRWYPNISTVMFKFRTFSSSALLMYLATRDLRDFMSVELTDGHIKVSYDLGSGMASVVSNQNHNDGKWKSFTLSRIQKQANISIVDIDTNQEENIATSSSGNNFGLDLKADDKIYFGGLPTLRNLSMKARPEVNLKKYSGCLKDIEISRTPYNILSSPDYVGVTKGCSLENVYTVSFPKPGFVELSPVPIDVGTEINLSFSTKNESGIILLGSGGTPAPPRRKRRQTGQAYYAILLNRGRLEVHLSTGARTMRKIVIRPEPNLFHDGREHSVHVERTRGIFTVQVDENRRYMQNLTVEQPIEVKKLFVGGAPPEFQPSPLRNIPPFEGCIWNLVINSVPMDFARPVSFKNADIGRCAHQKLREDEDGAAPAEIVIQPEPVPTPAFPTPTPVLTHGPCAAESEPALLIGSKQFGLSRNSHIAIAFDDTKVKNRLTIELEVRTEAESGLLFYMARINHADFATVQLRNGLPYFSYDLGSGDTHTMIPTKINDGQWHKIKIMRSKQEGILYVDGASNRTISPKKADILDVVGMLYVGGLPINYTTRRIGPVTYSIDGCVRNLHMAEAPADLEQPTSSFHVGTCFANAQRGTYFDGTGFAKAVGGFKVGLDLLVEFEFRTTTTTGVLLGISSQKMDGMGIEMIDEKLMFHVDNGAGRFTAVYDAGVPGHLCDGQWHKVTANKIKHRIELTVDGNQVEAQSPNPASTSADTNDPVFVGGFPDDLKQFGLTTSIPFRGCIRSLKLTKGTGKPLEVNFAKALELRGVQPVSCPAN.

Positions 1–22 (MPGAAGVLLLLLLSGGLGGVQA) are cleaved as a signal peptide. Positions 35–286 (QQRGLFPAVL…SVKDISVGGM (252 aa)) constitute a Laminin N-terminal domain. 2 N-linked (GlcNAc...) asparagine glycosylation sites follow: Asn55 and Asn89. 6 cysteine pairs are disulfide-bonded: Cys287–Cys296, Cys289–Cys307, Cys309–Cys318, Cys321–Cys341, Cys344–Cys353, and Cys346–Cys378. Laminin EGF-like domains lie at 287 to 343 (CICY…ECEA), 344 to 413 (CNCH…PCQP), 414 to 468 (CHCD…DCKA), and 469 to 517 (CNCS…GCDE). A glycan (N-linked (GlcNAc...) asparagine) is linked at Asn303. N-linked (GlcNAc...) asparagine glycosylation is found at Asn363 and Asn380. 10 disulfide bridges follow: Cys381/Cys390, Cys393/Cys411, Cys414/Cys426, Cys416/Cys442, Cys444/Cys453, Cys456/Cys466, Cys469/Cys482, Cys471/Cys486, Cys488/Cys497, and Cys500/Cys515. An N-linked (GlcNAc...) asparagine glycan is attached at Asn470. In terms of domain architecture, Laminin EGF-like 5; first part spans 518–527 (CFCSGVSNRC). The region spanning 531–723 (YWTYGKIQDM…DGSIAAAVEV (193 aa)) is the Laminin IV type A 1 domain. The Laminin EGF-like 5; second part domain maps to 724–756 (CQCPPGYTGSSCESCWPRHRRVNGTIFGGICEP). A glycan (N-linked (GlcNAc...) asparagine) is linked at Asn746. 32 disulfides stabilise this stretch: Cys757–Cys766, Cys759–Cys773, Cys776–Cys785, Cys788–Cys804, Cys807–Cys822, Cys809–Cys832, Cys835–Cys844, Cys847–Cys862, Cys865–Cys879, Cys867–Cys886, Cys889–Cys898, Cys901–Cys915, Cys918–Cys930, Cys920–Cys937, Cys939–Cys948, Cys951–Cys964, Cys967–Cys979, Cys969–Cys985, Cys987–Cys996, Cys999–Cys1011, Cys1014–Cys1023, Cys1016–Cys1030, Cys1032–Cys1041, Cys1044–Cys1057, Cys1060–Cys1072, Cys1062–Cys1079, Cys1081–Cys1090, Cys1093–Cys1103, Cys1106–Cys1118, Cys1108–Cys1134, Cys1136–Cys1145, and Cys1148–Cys1163. 8 consecutive Laminin EGF-like domains span residues 757 to 806 (CQCF…DCQP), 807 to 864 (CACP…SCQP), 865 to 917 (CQCN…NCQP), 918 to 966 (CRCN…GCVP), 967 to 1013 (CNCN…GCTA), 1014 to 1059 (CECS…GCKA), 1060 to 1105 (CNCS…RCNL), and 1106 to 1165 (CDCF…GCSS). A glycan (N-linked (GlcNAc...) asparagine) is linked at Asn1061. The 10-residue stretch at 1166 to 1175 (CYCFGTTTQC) folds into the Laminin EGF-like 14; first part domain. Residues 1176–1379 (SEAKGLIRTW…MTPPADLIEK (204 aa)) enclose the Laminin IV type A 2 domain. The 40-residue stretch at 1380 to 1419 (CDCPLGYSGLSCEACLPGFYRLRSQPGGRTPGPTLGTCVP) folds into the Laminin EGF-like 14; second part domain. Intrachain disulfides connect Cys1420–Cys1429, Cys1422–Cys1436, Cys1439–Cys1448, Cys1451–Cys1466, Cys1469–Cys1484, Cys1471–Cys1494, Cys1497–Cys1506, Cys1509–Cys1524, Cys1527–Cys1539, Cys1529–Cys1546, Cys1548–Cys1557, and Cys1560–Cys1571. 3 Laminin EGF-like domains span residues 1420-1468 (CQCN…DCQQ), 1469-1526 (CACP…SCQE), and 1527-1573 (CECD…ECVF). A domain II and I region spans residues 1574-2144 (CGDECTGLLL…NQARKQANSI (571 aa)). N-linked (GlcNAc...) asparagine glycosylation is found at Asn1597, Asn1614, Asn1700, Asn1810, Asn1901, Asn1916, Asn1920, Asn2017, Asn2028, Asn2045, Asn2126, and Asn2240. The stretch at 1630–2150 (ERLIQLAEGN…ANSIKVSVSS (521 aa)) forms a coiled coil. Laminin G-like domains follow at residues 2145–2328 (KVSV…CKGC), 2340–2521 (TIQF…TKGC), 2526–2710 (VYTV…IGRC), 2763–2934 (SKQF…VGTC), and 2939–3110 (QRGT…KALE). A disulfide bond links Cys2302 and Cys2328. Residues Asn2360, Asn2435, and Asn2478 are each glycosylated (N-linked (GlcNAc...) asparagine). The cysteines at positions 2495 and 2521 are disulfide-linked. N-linked (GlcNAc...) asparagine glycans are attached at residues Asn2551, Asn2558, and Asn2648. A disulfide bridge connects residues Cys2683 and Cys2710. Asn2868 and Asn2893 each carry an N-linked (GlcNAc...) asparagine glycan. Residues Cys2909 and Cys2934 are joined by a disulfide bond. The span at 3043-3060 (GNQVEAQSPNPASTSADT) shows a compositional bias: polar residues. The tract at residues 3043 to 3063 (GNQVEAQSPNPASTSADTNDP) is disordered.

As to quaternary structure, laminin is a complex glycoprotein, consisting of three different polypeptide chains (alpha, beta, gamma), which are bound to each other by disulfide bonds into a cross-shaped molecule comprising one long and three short arms with globules at each end. Alpha-2 is a subunit of laminin-2 (laminin-211 or merosin), laminin-4 (laminin-221 or S-merosin) and laminin-12 (laminin-213). Interacts with FBLN1, FBLN2 and NID2. As to expression, placenta, striated muscle, peripheral nerve, cardiac muscle, pancreas, lung, spleen, kidney, adrenal gland, skin, testis, meninges, choroid plexus, and some other regions of the brain; not in liver, thymus and bone.

Its subcellular location is the secreted. The protein localises to the extracellular space. It localises to the extracellular matrix. It is found in the basement membrane. Binding to cells via a high affinity receptor, laminin is thought to mediate the attachment, migration and organization of cells into tissues during embryonic development by interacting with other extracellular matrix components. The polypeptide is Laminin subunit alpha-2 (LAMA2) (Homo sapiens (Human)).